The following is a 156-amino-acid chain: ATP synthase subunit b (156 aa).

The helical transmembrane segment at 7–29 (LLGQAIAFFFFVTFCMKYVWPPL) threads the bilayer.

The protein belongs to the ATPase B chain family. In terms of assembly, F-type ATPases have 2 components, F(1) - the catalytic core - and F(0) - the membrane proton channel. F(1) has five subunits: alpha(3), beta(3), gamma(1), delta(1), epsilon(1). F(0) has three main subunits: a(1), b(2) and c(10-14). The alpha and beta chains form an alternating ring which encloses part of the gamma chain. F(1) is attached to F(0) by a central stalk formed by the gamma and epsilon chains, while a peripheral stalk is formed by the delta and b chains.

It is found in the cell inner membrane. Its function is as follows. F(1)F(0) ATP synthase produces ATP from ADP in the presence of a proton or sodium gradient. F-type ATPases consist of two structural domains, F(1) containing the extramembraneous catalytic core and F(0) containing the membrane proton channel, linked together by a central stalk and a peripheral stalk. During catalysis, ATP synthesis in the catalytic domain of F(1) is coupled via a rotary mechanism of the central stalk subunits to proton translocation. Component of the F(0) channel, it forms part of the peripheral stalk, linking F(1) to F(0). The sequence is that of ATP synthase subunit b from Photobacterium profundum (strain SS9).